The chain runs to 258 residues: MNRIDLSFNKVKEENRKALIPFVTCGADFTVEETADLIVSLEKEGATIVEIGVPFRDPLADGPVIQNAYTKALQNGTKVKDVFRCVELIRGKSEVPIVLMVYFNVVYFTGVENFLRIAAKSGVDGLIVPDVPLEERGDLDKICEDNCIYLIPLVARTSKDRIAAITKGAKGFVYCVSTNGTTGERKTLDSGTHEYLEEVRKNVDIPMCIGFGISSKEVVKEVKDYCDGVIVGSAIVKRMAEGKEAVIDFVKDLSDGLK.

Active-site proton acceptor residues include E50 and D61.

It belongs to the TrpA family. As to quaternary structure, tetramer of two alpha and two beta chains.

It carries out the reaction (1S,2R)-1-C-(indol-3-yl)glycerol 3-phosphate + L-serine = D-glyceraldehyde 3-phosphate + L-tryptophan + H2O. It functions in the pathway amino-acid biosynthesis; L-tryptophan biosynthesis; L-tryptophan from chorismate: step 5/5. In terms of biological role, the alpha subunit is responsible for the aldol cleavage of indoleglycerol phosphate to indole and glyceraldehyde 3-phosphate. The protein is Tryptophan synthase alpha chain of Clostridium beijerinckii (strain ATCC 51743 / NCIMB 8052) (Clostridium acetobutylicum).